The following is a 529-amino-acid chain: Glucose-6-phosphate isomerase (529 aa).

The active-site Proton donor is Glu-322. Active-site residues include His-351 and Lys-455.

Belongs to the GPI family.

The protein resides in the cytoplasm. The catalysed reaction is alpha-D-glucose 6-phosphate = beta-D-fructose 6-phosphate. The protein operates within carbohydrate biosynthesis; gluconeogenesis. It functions in the pathway carbohydrate degradation; glycolysis; D-glyceraldehyde 3-phosphate and glycerone phosphate from D-glucose: step 2/4. Catalyzes the reversible isomerization of glucose-6-phosphate to fructose-6-phosphate. In Thermosynechococcus vestitus (strain NIES-2133 / IAM M-273 / BP-1), this protein is Glucose-6-phosphate isomerase.